The sequence spans 225 residues: MSIKVWPKSERPREKLLQYGAENLSDAELIAVLLGKGVKGKNAVSVAHELLNELGCLRGVVTATKDEFAKVTGIGPCKYAQFQAGFEIFKRNLEIKLQREDVFNNVDDTKRYLQAKLRDCQREKFALLMLDSQHQLIAFRTMFNGTINSAAVYPRELIKQVMIDNAAAIILVHNHPSGVAEPSHADIRLTTEIKSAMASIDVPVLDHFVVGDKETISFAQRGLLT.

An MPN domain is found at Val-102 to Leu-224. 3 residues coordinate Zn(2+): His-173, His-175, and Asp-186. Residues His-173 to Asp-186 carry the JAMM motif motif.

This sequence belongs to the UPF0758 family.

The protein is UPF0758 protein MADE_1000235 of Alteromonas mediterranea (strain DSM 17117 / CIP 110805 / LMG 28347 / Deep ecotype).